A 329-amino-acid chain; its full sequence is Ig gamma-2 chain C region (329 aa).

3 disulfide bridges follow: cysteine 28-cysteine 79, cysteine 142-cysteine 202, and cysteine 248-cysteine 308. Asparagine 178 is a glycosylation site (N-linked (GlcNAc...) asparagine).

Its subcellular location is the secreted. This Cavia porcellus (Guinea pig) protein is Ig gamma-2 chain C region.